The following is a 466-amino-acid chain: Cytochrome P450 85A (466 aa).

A helical transmembrane segment spans residues A2–L22. C414 provides a ligand contact to heme.

It belongs to the cytochrome P450 family. Requires heme as cofactor.

The protein resides in the membrane. In terms of biological role, catalyzes the C6-oxidation step in brassinosteroids biosynthesis. The protein is Cytochrome P450 85A of Phaseolus vulgaris (Kidney bean).